We begin with the raw amino-acid sequence, 222 residues long: Vespryn (222 aa).

Residues 1 to 44 form the signal peptide; that stretch reads MSPSAGLQFSLYFLQTKKVLWKLTDKEKGLCYILLFTLCFFADQ. Residues 45–52 constitute a propeptide that is removed on maturation; the sequence is ENGGKALA. Positions 53 to 159 constitute a B30.2/SPRY domain; the sequence is SPPGIWKRAD…RIWQMGLWWL (107 aa). A propeptide spanning residues 160–222 is cleaved from the precursor; the sequence is RHLETDPGRV…LGGTVSLTTL (63 aa). N195 is a glycosylation site (N-linked (GlcNAc...) asparagine).

Belongs to the ohanin/vespryn family. Expressed by the venom gland.

The protein localises to the secreted. In terms of biological role, neurotoxin that produces dose-dependent hypolocomotion and hyperalgesia in mice. May directly act on the central nervous system, as it is 6500-fold more potent when administered intracerebroventricularly than intraperitoneal. In Crotalus adamanteus (Eastern diamondback rattlesnake), this protein is Vespryn.